A 146-amino-acid polypeptide reads, in one-letter code: Transcription antitermination protein NusB (146 aa).

It belongs to the NusB family.

In terms of biological role, involved in transcription antitermination. Required for transcription of ribosomal RNA (rRNA) genes. Binds specifically to the boxA antiterminator sequence of the ribosomal RNA (rrn) operons. In Solibacter usitatus (strain Ellin6076), this protein is Transcription antitermination protein NusB.